The chain runs to 593 residues: Corrinoid activation enzyme RamQ (593 aa).

The region spanning 1 to 76 (MRVLFPLLEE…GMEIYASREQ (76 aa)) is the 2Fe-2S ferredoxin-type domain. Residues C35, C41, C44, and C60 each coordinate [2Fe-2S] cluster.

[2Fe-2S] cluster is required as a cofactor.

Its function is as follows. Involved in the degradation of the quaternary amines L-proline betaine and L-carnitine. Component of a corrinoid-dependent methyltransferase system that transfers a methyl group from L-proline betaine or L-carnitine to tetrahydrofolate (THF), forming methyl-THF, a key intermediate in the Wood-Ljungdahl acetogenesis pathway. RamQ is not required for the methyl transfer, but it stimulates reduction of reconstituted MtqC from the Co(II) state to the Co(I) state in vitro. It also stimulates the rate of THF methylation. The polypeptide is Corrinoid activation enzyme RamQ (Eubacterium limosum).